Consider the following 440-residue polypeptide: F-box protein pof12 (440 aa).

Residues 8-54 (KNPASIFSHETLLHVLNDLSAHDLAALERVSRSWNSIVRRSSVWHNL) form the F-box domain.

In terms of assembly, interacts with skp1.

Its subcellular location is the nucleus. The chain is F-box protein pof12 (pof12) from Schizosaccharomyces pombe (strain 972 / ATCC 24843) (Fission yeast).